Consider the following 216-residue polypeptide: Large ribosomal subunit protein eL15 (216 aa).

It belongs to the eukaryotic ribosomal protein eL15 family.

The sequence is that of Large ribosomal subunit protein eL15 from Metallosphaera sedula (strain ATCC 51363 / DSM 5348 / JCM 9185 / NBRC 15509 / TH2).